The sequence spans 604 residues: Pescadillo homolog (604 aa).

Positions 349–448 (PTSTLFSKFI…ELLPVNKYAP (100 aa)) constitute a BRCT domain. Disordered stretches follow at residues 452–562 (LPPH…MTNK) and 579–604 (TRTQ…LSKK). Coiled coils occupy residues 468-522 (EAEK…LEAA) and 573-604 (GIDK…LSKK). The segment covering 476–510 (ENAEEEEEDEVDEDDEDADEDEEDEEEEDEEEDED) has biased composition (acidic residues). The segment covering 593–604 (KTKAQLDKLSKK) has biased composition (basic and acidic residues).

This sequence belongs to the pescadillo family. Component of the NOP7 complex, composed of ERB1, NOP7 and YTM1. The complex is held together by ERB1, which interacts with NOP7 via its N-terminal domain and with YTM1 via a high-affinity interaction between the seven-bladed beta-propeller domains of the 2 proteins. The NOP7 complex associates with the 66S pre-ribosome.

It localises to the nucleus. The protein localises to the nucleolus. The protein resides in the nucleoplasm. Its function is as follows. Component of the NOP7 complex, which is required for maturation of the 25S and 5.8S ribosomal RNAs and formation of the 60S ribosome. This is Pescadillo homolog from Scheffersomyces stipitis (strain ATCC 58785 / CBS 6054 / NBRC 10063 / NRRL Y-11545) (Yeast).